Here is a 567-residue protein sequence, read N- to C-terminus: MAGVGDAAAPGEGGGGGVDGPQRDGRGEAEQPGGSGGQGPPPAPQLTETLGFYESDRRRERRRGRTELSLLRFLSAELTRGYFLEHNEAKYTERRERVYTCLRIPRELEKLMVFGIFLCLDAFLYVFTLLPLRVFLALFRLLTLPCYGLRDRRLLQPAQVCDILKGVILVICYFMMHYVDYSMMYHLIRGQSVIKLYIIYNMLEVADRLFSSFGQDILDALYWTATEPKERKRAHIGVIPHFFMAVLYVFLHAILIMVQATTLNVAFNSHNKSLLTIMMSNNFVEIKGSVFKKFEKNNLFQMSNSDIKERFTNYVLLLIVCLRNMEQFSWNPDHLWVLFPDVCMVIASEIAVDIVKHAFITKFNDITADVYSEYRASLAFDLVSSRQKNAYTDYSDSVARRMGFIPLPLAVLLIRVVTSSIKVQGILSYACVILFYFGLISLKVLNSIVLLGKSCQYVKEAKMEEKLSNPPATCTPGKPSSKSQNKCKPSQGLSTEENLSASITKQPIHQKENIIPLLVTSNSDQFLTTPDGDEKDITQDNSELKHRSSKKDLLEIDRFTICGNRID.

The span at 1 to 10 (MAGVGDAAAP) shows a compositional bias: low complexity. Positions 1-60 (MAGVGDAAAPGEGGGGGVDGPQRDGRGEAEQPGGSGGQGPPPAPQLTETLGFYESDRRRE) are disordered. A2 carries the post-translational modification N-acetylalanine. The next 5 helical transmembrane spans lie at 111 to 131 (LMVF…TLLP), 157 to 179 (PAQV…MHYV), 236 to 256 (IGVI…AILI), 403 to 423 (GFIP…SIKV), and 432 to 452 (VILF…VLLG). A disordered region spans residues 466 to 499 (KLSNPPATCTPGKPSSKSQNKCKPSQGLSTEENL). Positions 478–499 (KPSSKSQNKCKPSQGLSTEENL) are enriched in polar residues. S523 carries the phosphoserine modification. T529 carries the post-translational modification Phosphothreonine.

The protein belongs to the TAPT1 family.

Its subcellular location is the cytoplasm. The protein localises to the cytoskeleton. It localises to the microtubule organizing center. The protein resides in the centrosome. It is found in the cilium basal body. Its subcellular location is the membrane. Its function is as follows. Plays a role in primary cilia formation. May act as a downstream effector of HOXC8 possibly by transducing or transmitting extracellular information required for axial skeletal patterning during development. May be involved in cartilage and bone development. May play a role in the differentiation of cranial neural crest cells. Functionally, (Microbial infection) In case of infection, may act as a fusion receptor for cytomegalovirus (HCMV) strain AD169. The sequence is that of Transmembrane anterior posterior transformation protein 1 homolog (TAPT1) from Homo sapiens (Human).